Consider the following 338-residue polypeptide: 4-hydroxy-3-methylbut-2-enyl diphosphate reductase (338 aa).

C21 provides a ligand contact to [4Fe-4S] cluster. The (2E)-4-hydroxy-3-methylbut-2-enyl diphosphate site is built by H50 and H83. Dimethylallyl diphosphate-binding residues include H50 and H83. Isopentenyl diphosphate-binding residues include H50 and H83. C105 serves as a coordination point for [4Fe-4S] cluster. H133 is a (2E)-4-hydroxy-3-methylbut-2-enyl diphosphate binding site. H133 serves as a coordination point for dimethylallyl diphosphate. H133 serves as a coordination point for isopentenyl diphosphate. E135 acts as the Proton donor in catalysis. Residue T173 participates in (2E)-4-hydroxy-3-methylbut-2-enyl diphosphate binding. [4Fe-4S] cluster is bound at residue C203. The (2E)-4-hydroxy-3-methylbut-2-enyl diphosphate site is built by S231, S232, N233, and S276. Dimethylallyl diphosphate is bound by residues S231, S232, N233, and S276. The isopentenyl diphosphate site is built by S231, S232, N233, and S276.

Belongs to the IspH family. It depends on [4Fe-4S] cluster as a cofactor.

It carries out the reaction isopentenyl diphosphate + 2 oxidized [2Fe-2S]-[ferredoxin] + H2O = (2E)-4-hydroxy-3-methylbut-2-enyl diphosphate + 2 reduced [2Fe-2S]-[ferredoxin] + 2 H(+). The catalysed reaction is dimethylallyl diphosphate + 2 oxidized [2Fe-2S]-[ferredoxin] + H2O = (2E)-4-hydroxy-3-methylbut-2-enyl diphosphate + 2 reduced [2Fe-2S]-[ferredoxin] + 2 H(+). It participates in isoprenoid biosynthesis; dimethylallyl diphosphate biosynthesis; dimethylallyl diphosphate from (2E)-4-hydroxy-3-methylbutenyl diphosphate: step 1/1. It functions in the pathway isoprenoid biosynthesis; isopentenyl diphosphate biosynthesis via DXP pathway; isopentenyl diphosphate from 1-deoxy-D-xylulose 5-phosphate: step 6/6. Functionally, catalyzes the conversion of 1-hydroxy-2-methyl-2-(E)-butenyl 4-diphosphate (HMBPP) into a mixture of isopentenyl diphosphate (IPP) and dimethylallyl diphosphate (DMAPP). Acts in the terminal step of the DOXP/MEP pathway for isoprenoid precursor biosynthesis. This chain is 4-hydroxy-3-methylbut-2-enyl diphosphate reductase, found in Streptomyces avermitilis (strain ATCC 31267 / DSM 46492 / JCM 5070 / NBRC 14893 / NCIMB 12804 / NRRL 8165 / MA-4680).